A 144-amino-acid polypeptide reads, in one-letter code: Deoxyuridine 5'-triphosphate nucleotidohydrolase (144 aa).

Residues 63 to 65, N76, and 80 to 82 contribute to the substrate site; these read RSG and TVD.

This sequence belongs to the dUTPase family. Mg(2+) is required as a cofactor.

It catalyses the reaction dUTP + H2O = dUMP + diphosphate + H(+). The protein operates within pyrimidine metabolism; dUMP biosynthesis; dUMP from dCTP (dUTP route): step 2/2. This enzyme is involved in nucleotide metabolism: it produces dUMP, the immediate precursor of thymidine nucleotides and it decreases the intracellular concentration of dUTP so that uracil cannot be incorporated into DNA. The sequence is that of Deoxyuridine 5'-triphosphate nucleotidohydrolase from Flavobacterium johnsoniae (strain ATCC 17061 / DSM 2064 / JCM 8514 / BCRC 14874 / CCUG 350202 / NBRC 14942 / NCIMB 11054 / UW101) (Cytophaga johnsonae).